A 633-amino-acid polypeptide reads, in one-letter code: Sodium- and chloride-dependent glycine transporter 1 (633 aa).

At 1-30 (MGLCVNGAVPSEATKKDENLKRGNWGNQIE) the chain is on the cytoplasmic side. Transmembrane regions (helical) follow at residues 31 to 51 (FVLT…FPYL), 58 to 78 (GAFM…LFFM), and 113 to 133 (YIGI…FASM). At 134 to 208 (NRVLPWTYCN…ISEDIGDFGE (75 aa)) the chain is on the extracellular side. 4 N-linked (GlcNAc...) asparagine glycosylation sites follow: asparagine 158, asparagine 164, asparagine 173, and asparagine 179. 9 consecutive transmembrane segments (helical) span residues 209–229 (VQLP…LCLI), 238–258 (VVYF…IRGI), 283–303 (VWGD…GGLI), 330–350 (SVYA…HLGV), 373–393 (LLPI…LLGL), 429–449 (IIGF…WLLL), 453–473 (YAAS…VMYI), 493–513 (LFFQ…ILIF), and 533–553 (ITIG…YAIF). The Cytoplasmic portion of the chain corresponds to 554-633 (KIWCSEGDTF…GQAHTQDSKV (80 aa)). The interval 588–633 (RYAQMSSTRSESNPEAQPLNPEKMKEDLSLTIQGSNGQAHTQDSKV) is disordered. Composition is skewed to polar residues over residues 591–602 (QMSSTRSESNPE) and 617–633 (LTIQ…DSKV).

This sequence belongs to the sodium:neurotransmitter symporter (SNF) (TC 2.A.22) family. SLC6A9 subfamily. As to expression, first expressed in early tailbud stage embryos in the midbrain and anterior spinal cord, and weakly in the hindbrain. By late tailbud stages, expression extends posteriorly in the spinal cord to appear in between somites. Expressed in the forebrain, retina, between the somites and in the blood islands by the swimming tadpole stages.

It localises to the cell membrane. It catalyses the reaction glycine(out) + chloride(out) + 2 Na(+)(out) = glycine(in) + chloride(in) + 2 Na(+)(in). In terms of biological role, sodium- and chloride-dependent glycine transporter which is essential for regulating glycine concentrations at inhibitory glycinergic synapses. This chain is Sodium- and chloride-dependent glycine transporter 1, found in Xenopus laevis (African clawed frog).